The chain runs to 202 residues: MATLIYVDKENGEPGTRVAAKDGLKLGSGPSIKALDGRSQVSTPRFGKTFDAPPALPKATRKALGTVNRATEKSVKTKGPLKQKQPSFSAKKMTEKTVKAKSSVPASDDAYPEIEKFFPFNPLDFESFDLPEEHQIAHLPLSGVPLMILDEERELEKLFQLGXPSPVKMPSPPWESNLLQSPSSILSTLDVELPPVCCDIDI.

The interval 1–92 (MATLIYVDKE…QKQPSFSAKK (92 aa)) is disordered. At A2 the chain carries N-acetylalanine. The D-box motif lies at 61–64 (RKAL). 2 short sequence motifs (TEK-box) span residues 71–73 (TEK) and 94–96 (TEK). The short motif at 163–173 (XPSPVKMPSPP) is the SH3-binding element. Residue S165 is modified to Phosphoserine; by CDK1.

It belongs to the securin family. Interacts with RPS10 and DNAJA1. Interacts with the caspase-like ESPL1, and prevents its protease activity probably by covering its active site. Interacts with TP53 and blocks its activity probably by blocking its binding to DNA. Interacts with the Ku 70 kDa subunit of ds-DNA kinase. Interacts with PTTG1IP. In terms of processing, phosphorylated at Ser-165 by CDK1 during mitosis. Post-translationally, phosphorylated in vitro by ds-DNA kinase. Ubiquitinated through 'Lys-11' linkage of ubiquitin moieties by the anaphase promoting complex (APC) at the onset of anaphase, conducting to its degradation. 'Lys-11'-linked ubiquitination is mediated by the E2 ligase UBE2C/UBCH10.

The protein resides in the cytoplasm. It is found in the nucleus. Its function is as follows. Regulatory protein, which plays a central role in chromosome stability, in the p53/TP53 pathway, and DNA repair. Probably acts by blocking the action of key proteins. During the mitosis, it blocks Separase/ESPL1 function, preventing the proteolysis of the cohesin complex and the subsequent segregation of the chromosomes. At the onset of anaphase, it is ubiquitinated, conducting to its destruction and to the liberation of ESPL1. Its function is however not limited to a blocking activity, since it is required to activate ESPL1. Negatively regulates the transcriptional activity and related apoptosis activity of TP53. The negative regulation of TP53 may explain the strong transforming capability of the protein when it is overexpressed. May also play a role in DNA repair via its interaction with Ku, possibly by connecting DNA damage-response pathways with sister chromatid separation. The chain is Securin (PTTG1) from Pan troglodytes (Chimpanzee).